A 169-amino-acid chain; its full sequence is Required for excision 1-B domain-containing protein (169 aa).

The polypeptide is Required for excision 1-B domain-containing protein (Mus musculus (Mouse)).